A 455-amino-acid polypeptide reads, in one-letter code: Glutamyl-tRNA reductase (455 aa).

Residues 49–52 (TCNR), S109, 114–116 (ETQ), and Q120 each bind substrate. The active-site Nucleophile is C50. 189–194 (GAGKMG) serves as a coordination point for NADP(+).

The protein belongs to the glutamyl-tRNA reductase family. In terms of assembly, homodimer.

The catalysed reaction is (S)-4-amino-5-oxopentanoate + tRNA(Glu) + NADP(+) = L-glutamyl-tRNA(Glu) + NADPH + H(+). The protein operates within porphyrin-containing compound metabolism; protoporphyrin-IX biosynthesis; 5-aminolevulinate from L-glutamyl-tRNA(Glu): step 1/2. Catalyzes the NADPH-dependent reduction of glutamyl-tRNA(Glu) to glutamate 1-semialdehyde (GSA). The chain is Glutamyl-tRNA reductase from Bacillus subtilis (strain 168).